The sequence spans 138 residues: Acidic phospholipase A2 beta (138 aa).

The N-terminal stretch at 1–16 is a signal peptide; sequence MRTLWIVAVLLLGVEG. Disulfide bonds link Cys42-Cys131, Cys44-Cys60, Cys59-Cys111, Cys65-Cys138, Cys66-Cys104, Cys73-Cys97, and Cys91-Cys102. Tyr43, Gly45, and Gly47 together coordinate Ca(2+). His63 is a catalytic residue. Ca(2+) is bound at residue Asp64. Asp105 is an active-site residue.

It belongs to the phospholipase A2 family. Group II subfamily. D49 sub-subfamily. In terms of assembly, dimer. Requires Ca(2+) as cofactor. As to expression, expressed by the venom gland.

The protein resides in the secreted. It carries out the reaction a 1,2-diacyl-sn-glycero-3-phosphocholine + H2O = a 1-acyl-sn-glycero-3-phosphocholine + a fatty acid + H(+). Its function is as follows. PLA2 catalyzes the calcium-dependent hydrolysis of the 2-acyl groups in 3-sn-phosphoglycerides. This is Acidic phospholipase A2 beta from Crotalus adamanteus (Eastern diamondback rattlesnake).